An 85-amino-acid polypeptide reads, in one-letter code: Sec-independent protein translocase protein TatA (85 aa).

Residues methionine 1 to glycine 21 traverse the membrane as a helical segment. Positions phenylalanine 39 to proline 51 are enriched in basic and acidic residues. The disordered stretch occupies residues phenylalanine 39 to glycine 85. Positions alanine 52–proline 65 are enriched in low complexity. The span at arginine 66–glycine 85 shows a compositional bias: basic and acidic residues.

Belongs to the TatA/E family. As to quaternary structure, the Tat system comprises two distinct complexes: a TatABC complex, containing multiple copies of TatA, TatB and TatC subunits, and a separate TatA complex, containing only TatA subunits. Substrates initially bind to the TatABC complex, which probably triggers association of the separate TatA complex to form the active translocon.

It is found in the cell inner membrane. Functionally, part of the twin-arginine translocation (Tat) system that transports large folded proteins containing a characteristic twin-arginine motif in their signal peptide across membranes. TatA could form the protein-conducting channel of the Tat system. This is Sec-independent protein translocase protein TatA from Ralstonia nicotianae (strain ATCC BAA-1114 / GMI1000) (Ralstonia solanacearum).